The primary structure comprises 272 residues: Shikimate dehydrogenase (NADP(+)) (272 aa).

Shikimate-binding positions include 14–16 (SKS) and Thr61. Lys65 functions as the Proton acceptor in the catalytic mechanism. Position 77 (Glu77) interacts with NADP(+). Shikimate contacts are provided by Asn86 and Asp102. Residues 126 to 130 (GAGGA), 149 to 154 (NRTQEK), and Met213 each bind NADP(+). Tyr215 contacts shikimate. Gly237 lines the NADP(+) pocket.

The protein belongs to the shikimate dehydrogenase family. In terms of assembly, homodimer.

It carries out the reaction shikimate + NADP(+) = 3-dehydroshikimate + NADPH + H(+). It participates in metabolic intermediate biosynthesis; chorismate biosynthesis; chorismate from D-erythrose 4-phosphate and phosphoenolpyruvate: step 4/7. Functionally, involved in the biosynthesis of the chorismate, which leads to the biosynthesis of aromatic amino acids. Catalyzes the reversible NADPH linked reduction of 3-dehydroshikimate (DHSA) to yield shikimate (SA). This is Shikimate dehydrogenase (NADP(+)) from Erwinia tasmaniensis (strain DSM 17950 / CFBP 7177 / CIP 109463 / NCPPB 4357 / Et1/99).